Consider the following 449-residue polypeptide: UDP-N-acetylmuramoylalanine--D-glutamate ligase (449 aa).

119-125 (GTNGKTT) contributes to the ATP binding site.

It belongs to the MurCDEF family.

The protein resides in the cytoplasm. It catalyses the reaction UDP-N-acetyl-alpha-D-muramoyl-L-alanine + D-glutamate + ATP = UDP-N-acetyl-alpha-D-muramoyl-L-alanyl-D-glutamate + ADP + phosphate + H(+). The protein operates within cell wall biogenesis; peptidoglycan biosynthesis. Cell wall formation. Catalyzes the addition of glutamate to the nucleotide precursor UDP-N-acetylmuramoyl-L-alanine (UMA). This is UDP-N-acetylmuramoylalanine--D-glutamate ligase from Lactococcus lactis subsp. cremoris (strain SK11).